Consider the following 101-residue polypeptide: Small ribosomal subunit protein bS18c (101 aa).

The protein belongs to the bacterial ribosomal protein bS18 family. Part of the 30S ribosomal subunit.

The protein localises to the plastid. Its subcellular location is the chloroplast. The chain is Small ribosomal subunit protein bS18c from Eucalyptus globulus subsp. globulus (Tasmanian blue gum).